A 3106-amino-acid chain; its full sequence is Cilia- and flagella-associated protein 54 (3106 aa).

Low complexity-rich tracts occupy residues 1–24 (MASSRSSSSSSEESPDSETSVSPV), 34–48 (STAVLKSPSESKSSS), and 2356–2368 (ESCSPTSPETSTT). 2 disordered regions span residues 1 to 58 (MASS…THSE) and 2354 to 2374 (PEESCSPTSPETSTTESKDDS).

This sequence belongs to the CFAP54 family. Expressed at high level in the testis and at a low level in the lung and brain.

It is found in the cytoplasm. It localises to the cytoskeleton. The protein localises to the cilium axoneme. Required for assembly and function of cilia and flagella. In Mus musculus (Mouse), this protein is Cilia- and flagella-associated protein 54.